A 93-amino-acid polypeptide reads, in one-letter code: Co-chaperonin GroES (93 aa).

This sequence belongs to the GroES chaperonin family. As to quaternary structure, heptamer of 7 subunits arranged in a ring. Interacts with the chaperonin GroEL.

The protein localises to the cytoplasm. Together with the chaperonin GroEL, plays an essential role in assisting protein folding. The GroEL-GroES system forms a nano-cage that allows encapsulation of the non-native substrate proteins and provides a physical environment optimized to promote and accelerate protein folding. GroES binds to the apical surface of the GroEL ring, thereby capping the opening of the GroEL channel. This is Co-chaperonin GroES from Streptococcus intermedius.